A 1028-amino-acid polypeptide reads, in one-letter code: Sporulation-specific protein 3 (1028 aa).

The protein localises to the prospore membrane. Has a role in spore morphogenesis. Involved in the assembly of the forespore membrane. In Schizosaccharomyces pombe (strain 972 / ATCC 24843) (Fission yeast), this protein is Sporulation-specific protein 3 (spo3).